We begin with the raw amino-acid sequence, 210 residues long: Large ribosomal subunit protein uL22 (210 aa).

Residues 123 to 210 (NEMTSKETVK…TKSTKKEGSK (88 aa)) form a disordered region. Residues 126 to 157 (TSKETVKEPAKKPSAKVEKPAEAKAPKQETST) show a composition bias toward basic and acidic residues. A compositionally biased stretch (low complexity) spans 158 to 185 (KKPTTTTESKPKTSKAPAQKQAAKVAKP).

This sequence belongs to the universal ribosomal protein uL22 family. In terms of assembly, part of the 50S ribosomal subunit.

In terms of biological role, this protein binds specifically to 23S rRNA; its binding is stimulated by other ribosomal proteins, e.g. L4, L17, and L20. It is important during the early stages of 50S assembly. It makes multiple contacts with different domains of the 23S rRNA in the assembled 50S subunit and ribosome. Functionally, the globular domain of the protein is located near the polypeptide exit tunnel on the outside of the subunit, while an extended beta-hairpin is found that lines the wall of the exit tunnel in the center of the 70S ribosome. The polypeptide is Large ribosomal subunit protein uL22 (Metamycoplasma arthritidis (strain 158L3-1) (Mycoplasma arthritidis)).